Reading from the N-terminus, the 83-residue chain is Small ribosomal subunit protein bS16 (83 aa).

This sequence belongs to the bacterial ribosomal protein bS16 family.

This Chromobacterium violaceum (strain ATCC 12472 / DSM 30191 / JCM 1249 / CCUG 213 / NBRC 12614 / NCIMB 9131 / NCTC 9757 / MK) protein is Small ribosomal subunit protein bS16.